The sequence spans 82 residues: Myosin light chain alkali (82 aa).

The EF-hand domain occupies 7–42 (GCYEDFIECLKLYDKEENGTMLLAELQHALLALGEN).

Myosin is a hexamer of 2 heavy chains and 4 light chains.

In Drosophila teissieri (Fruit fly), this protein is Myosin light chain alkali (Mlc1).